Here is a 266-residue protein sequence, read N- to C-terminus: Adaptin ear-binding coat-associated protein 2 (266 aa).

Disordered stretches follow at residues 164–191 (SMKKKDGAAGTPRARPTSTGGLSLLPPP) and 244–266 (GDFTKSTGSTSSQTQPGAGWVQF). The residue at position 181 (serine 181) is a Phosphoserine. A WXXF motif 1 motif is present at residues 243–246 (WGDF). Low complexity predominate over residues 247–258 (TKSTGSTSSQTQ). The WXXF motif 2 motif lies at 263 to 266 (WVQF).

Belongs to the NECAP family. As to quaternary structure, interacts with AP1G1 and AP2A1 components of the adapter protein complexes AP-1 and AP-2. Interacts with the GAE domain proteins GGA1, GGA2 and GGA3.

The protein resides in the cytoplasmic vesicle. It is found in the clathrin-coated vesicle membrane. It localises to the cell membrane. Its function is as follows. Involved in endocytosis. In Bos taurus (Bovine), this protein is Adaptin ear-binding coat-associated protein 2 (NECAP2).